The chain runs to 78 residues: Large ribosomal subunit protein bL28 (78 aa).

It belongs to the bacterial ribosomal protein bL28 family.

The chain is Large ribosomal subunit protein bL28 from Psychrobacter sp. (strain PRwf-1).